The primary structure comprises 675 residues: DNA ligase (675 aa).

NAD(+) is bound by residues 36–40, 85–86, and glutamate 117; these read DAAYD and SL. Lysine 119 (N6-AMP-lysine intermediate) is an active-site residue. 4 residues coordinate NAD(+): arginine 140, glutamate 177, lysine 294, and lysine 318. Positions 412, 415, 430, and 436 each coordinate Zn(2+). Residues 597–675 enclose the BRCT domain; that stretch reads AEDLPLSGNT…EAEFLELIGE (79 aa).

The protein belongs to the NAD-dependent DNA ligase family. LigA subfamily. Mg(2+) serves as cofactor. Mn(2+) is required as a cofactor.

It carries out the reaction NAD(+) + (deoxyribonucleotide)n-3'-hydroxyl + 5'-phospho-(deoxyribonucleotide)m = (deoxyribonucleotide)n+m + AMP + beta-nicotinamide D-nucleotide.. Functionally, DNA ligase that catalyzes the formation of phosphodiester linkages between 5'-phosphoryl and 3'-hydroxyl groups in double-stranded DNA using NAD as a coenzyme and as the energy source for the reaction. It is essential for DNA replication and repair of damaged DNA. This Thioalkalivibrio sulfidiphilus (strain HL-EbGR7) protein is DNA ligase.